A 63-amino-acid polypeptide reads, in one-letter code: Large ribosomal subunit protein uL29 (63 aa).

It belongs to the universal ribosomal protein uL29 family.

This Caulobacter vibrioides (strain ATCC 19089 / CIP 103742 / CB 15) (Caulobacter crescentus) protein is Large ribosomal subunit protein uL29.